We begin with the raw amino-acid sequence, 501 residues long: Uridine kinase (501 aa).

Position 17 is a phosphoserine (S17). 63–70 is a binding site for ATP; sequence GASGSGKT. S276 bears the Phosphoserine mark.

This sequence belongs to the uridine kinase family.

The protein resides in the cytoplasm. The protein localises to the nucleus. It catalyses the reaction uridine + ATP = UMP + ADP + H(+). The enzyme catalyses cytidine + ATP = CMP + ADP + H(+). It participates in pyrimidine metabolism; CTP biosynthesis via salvage pathway; CTP from cytidine: step 1/3. The protein operates within pyrimidine metabolism; UMP biosynthesis via salvage pathway; UMP from uridine: step 1/1. Its function is as follows. Catalyzes the conversion of uridine into UMP and cytidine into CMP in the pyrimidine salvage pathway. This is Uridine kinase (URK1) from Saccharomyces cerevisiae (strain ATCC 204508 / S288c) (Baker's yeast).